We begin with the raw amino-acid sequence, 768 residues long: U-box domain-containing protein 45 (768 aa).

One can recognise a U-box domain in the interval 278–352; sequence VPPEELRCPI…SSWCEQNGVQ (75 aa). ARM repeat units follow at residues 454 to 497, 500 to 540, 542 to 579, 581 to 620, and 623 to 662; these read EEAR…NLAV, NRNK…CLEE, KPVIGSSLAVPFMVNLLWTETEVQCKVDALHSLFHLST, PPNIPCLLSADLVNALQSLTISDEQRWTEKSLAVLLNLVL, and AGKDEMVSAPSLVSNLCTILDTGEPNEQEQAVSLLLILCN.

In terms of assembly, binds to SD129.

The enzyme catalyses S-ubiquitinyl-[E2 ubiquitin-conjugating enzyme]-L-cysteine + [acceptor protein]-L-lysine = [E2 ubiquitin-conjugating enzyme]-L-cysteine + N(6)-ubiquitinyl-[acceptor protein]-L-lysine.. The protein operates within protein modification; protein ubiquitination. In terms of biological role, functions as an E3 ubiquitin ligase. This Arabidopsis thaliana (Mouse-ear cress) protein is U-box domain-containing protein 45 (PUB45).